The sequence spans 1228 residues: Nitrate reductase alpha chain (1228 aa).

In terms of domain architecture, 4Fe-4S Mo/W bis-MGD-type spans 47–111 (DKVVRSTHGV…SFSWYIYSPL (65 aa)). Residues H54, C58, C62, and C97 each contribute to the [4Fe-4S] cluster site. D227 lines the Mo-bis(molybdopterin guanine dinucleotide) pocket.

It belongs to the prokaryotic molybdopterin-containing oxidoreductase family. [4Fe-4S] cluster is required as a cofactor. The cofactor is Mo-bis(molybdopterin guanine dinucleotide).

It localises to the cell membrane. It catalyses the reaction nitrate + a quinol = a quinone + nitrite + H2O. The alpha chain is the actual site of nitrate reduction. This is Nitrate reductase alpha chain (narG) from Bacillus subtilis (strain 168).